The primary structure comprises 158 residues: C-type lectin (158 aa).

The first 23 residues, 1–23 (MWQFTVVSLGWLAVFLSLSGAKG), serve as a signal peptide directing secretion. Disulfide bonds link cysteine 26/cysteine 37, cysteine 54/cysteine 154, and cysteine 129/cysteine 146. The C-type lectin domain occupies 33-155 (RNGVCNKLFP…CASLHPFICQ (123 aa)). The short motif at 119-121 (EPN) is the Mannose-binding element. Ca(2+) is bound by residues glutamate 127, asparagine 142, and aspartate 143.

This sequence belongs to the true venom lectin family. Expressed by the venom gland.

The protein localises to the secreted. In terms of biological role, mannose-binding lectin which recognizes specific carbohydrate structures and agglutinates a variety of animal cells by binding to cell-surface glycoproteins and glycolipids. May be a calcium-dependent lectin. This chain is C-type lectin, found in Cerberus rynchops (Dog-faced water snake).